Reading from the N-terminus, the 152-residue chain is Ribosome maturation factor RimP (152 aa).

Belongs to the RimP family.

The protein localises to the cytoplasm. Its function is as follows. Required for maturation of 30S ribosomal subunits. The sequence is that of Ribosome maturation factor RimP from Burkholderia ambifaria (strain MC40-6).